Reading from the N-terminus, the 119-residue chain is Ribonuclease P protein component (119 aa).

Belongs to the RnpA family. As to quaternary structure, consists of a catalytic RNA component (M1 or rnpB) and a protein subunit.

The enzyme catalyses Endonucleolytic cleavage of RNA, removing 5'-extranucleotides from tRNA precursor.. RNaseP catalyzes the removal of the 5'-leader sequence from pre-tRNA to produce the mature 5'-terminus. It can also cleave other RNA substrates such as 4.5S RNA. The protein component plays an auxiliary but essential role in vivo by binding to the 5'-leader sequence and broadening the substrate specificity of the ribozyme. In Nitrosomonas europaea (strain ATCC 19718 / CIP 103999 / KCTC 2705 / NBRC 14298), this protein is Ribonuclease P protein component.